The following is a 224-amino-acid chain: UPF0758 protein lwe1562 (224 aa).

Residues 102-224 (VIRCPDDAVK…YISLKEKGYF (123 aa)) form the MPN domain. Residues histidine 173, histidine 175, and aspartate 186 each contribute to the Zn(2+) site. The JAMM motif motif lies at 173 to 186 (HNHPSGDPTPSSED).

The protein belongs to the UPF0758 family.

This Listeria welshimeri serovar 6b (strain ATCC 35897 / DSM 20650 / CCUG 15529 / CIP 8149 / NCTC 11857 / SLCC 5334 / V8) protein is UPF0758 protein lwe1562.